The chain runs to 248 residues: Neurovirulence factor ICP34.5 (248 aa).

Residues methionine 1–arginine 14 show a composition bias toward basic residues. The interval methionine 1–proline 16 is required for nucleolar localization. Disordered stretches follow at residues methionine 1 to proline 129 and arginine 149 to threonine 174. Positions threonine 24 to serine 35 are enriched in polar residues. Over residues alanine 45–serine 58 the composition is skewed to pro residues. Over residues alanine 73 to proline 83 the composition is skewed to acidic residues. Composition is skewed to pro residues over residues aspartate 84–glutamate 93 and serine 119–leucine 128. A Nuclear export signal motif is present at residues leucine 128–arginine 137. 5 repeat units span residues alanine 161–proline 163, alanine 164–proline 166, alanine 167–proline 169, alanine 170–proline 172, and alanine 173–proline 175. Residues alanine 161 to proline 175 form a 5 X 3 AA tandem repeats of A-T-P region. Positions alanine 164 to threonine 174 are enriched in low complexity. Positions proline 175–histidine 188 are binding to PP1CA. Residues proline 175 to histidine 188 are interaction with host PPP1CA. The interval valine 190–valine 248 is important for interferon resistance. Residues arginine 200–valine 218 carry the Bipartite nuclear localization signal motif. The interval valine 218 to alanine 233 is interaction with host EIF2S1/EIF-2ALPHA.

It belongs to the PPP1R15 family. In terms of assembly, interacts with host PPP1CA; this interaction forms a high-molecular-weight complex that dephosphorylates EIF2S1/eIF-2alpha. Interacts with host EIF2S1/eIF-2alpha; this interaction is crucial for the specific dephosphorylation of EIF2S1/eIF-2alpha by PPP1CA. Binds to proliferating cell nuclear antigen (PCNA), which may release host cells from growth arrest and facilitate viral replication. Interacts (via N-terminus) with host C1QBP; this interaction allows C1QBP to be recruited to the inner nuclear membrane by ICP34.5. Interacts with host PRKCA. Interacts with protein UL31. Interacts with host STING/TMEM173; this interaction inhibits the intracellular DNA sensing pathway. Interacts with host BECN1; this interaction modulates host autophagy.

Its subcellular location is the host cytoplasm. It localises to the host nucleus. The protein localises to the host nucleolus. It is found in the virion. Functionally, inhibits the establishment of the immune response and of the integrated stress response (ISR) in the infected cell. Plays essential roles in viral nuclear egress to mediate capsid transit across the nuclear membrane. Facilitates nuclear egress cooperatively with host C1QBP and protein kinase C/PKC to induce lamin A/C phosphorylation and subsequent reorganization. In turn, lamina disassembles and nuclear egress occurs. Recruits the serine/threonine protein phosphatase PPP1CA/PP1-alpha to dephosphorylate the translation initiation factor EIF2S1/eIF-2alpha, thereby couteracting the host shutoff of protein synthesis involving double-stranded RNA-dependent protein kinase EIF2AK2/PKR. In turn, controls host IRF3 activation and subsequently inhibits host interferon response. Controls the DNA sensing pathway by interacting with and inhibiting host STING/TMEM173. Also down-modulates the host MHC class II proteins cell surface expression. Acts as a neurovirulence factor that has a profound effect on the growth of the virus in central nervous system tissue, by interacting with host BECN1 and thereby antagonizing the host autophagy response. The polypeptide is Neurovirulence factor ICP34.5 (ICP34.5) (Homo sapiens (Human)).